The following is a 133-amino-acid chain: MNNKLIYRSVRFATHNSQLLLPPLVLYRRILRQHKLLPGPQREMGDQYVRNEFKLHKDIDNPLHIVGFLASWQDYLHMISNGKWKDATLSSETLEKLSPEQTVQLYELMKETQKLHQDNEIESSKDVKRNNKD.

Residues 1–12 constitute a mitochondrion transit peptide; it reads MNNKLIYRSVRF.

Belongs to the complex I LYR family. SDHAF3 subfamily. As to quaternary structure, interacts with SDH2 within an SDH1-SDH2 subcomplex.

The protein resides in the mitochondrion. It is found in the mitochondrion intermembrane space. It localises to the mitochondrion matrix. Functionally, plays an essential role in the assembly of succinate dehydrogenase (SDH), an enzyme complex (also referred to as respiratory complex II) that is a component of both the tricarboxylic acid (TCA) cycle and the mitochondrial electron transport chain, and which couples the oxidation of succinate to fumarate with the reduction of ubiquinone (coenzyme Q) to ubiquinol. Promotes maturation of the iron-sulfur protein subunit SDH2 of the SDH catalytic dimer, protecting it from the deleterious effects of oxidants. Acts together with SDHAF1 (SDH6). In Saccharomyces cerevisiae (strain ATCC 204508 / S288c) (Baker's yeast), this protein is Succinate dehydrogenase assembly factor 3, mitochondrial.